The following is a 172-amino-acid chain: MGEAQLLVEDGNQKLFPCEVCGRCFATDVLERHGPICKKVFNKKRKPFNSLKQRLQGTDIPTVGKSPQPKVQPVRKSNWRQQHEDFINTIRSAKQFTLAIKEGRPLPPPPRPTSNPDYIQCPYCMRRFNETAAQRHINFCKNQTSRPVFDPIQMAARLVSRAQCKAQASLKK.

2 consecutive C2HC/C3H-type zinc fingers follow at residues 14–43 (KLFPCEVCGRCFATDVLERHGPICKKVFNK) and 117–146 (DYIQCPYCMRRFNETAAQRHINFCKNQTSR). The Zn(2+) site is built by C18, C21, H33, C37, C121, C124, H136, and C140.

This sequence belongs to the ZC2HC1 family. Requires Zn(2+) as cofactor.

The protein is Zinc finger C2HC domain-containing protein 1B (Zc2hc1b) of Mus musculus (Mouse).